The sequence spans 1233 residues: Insulin receptor substrate 1 (1233 aa).

Serine 3 is modified (phosphoserine). The mediates interaction with PHIP stretch occupies residues 3–133 (SPPDTDGFSD…AGGGCGGSCS (131 aa)). The 104-residue stretch at 12-115 (DVRKVGYLRK…WYQALLQLHN (104 aa)) folds into the PH domain. At serine 99 the chain carries Phosphoserine; by CK2. The 105-residue stretch at 155–259 (FKEVWQVILK…EAMRAMSDEF (105 aa)) folds into the IRS-type PTB domain. A disordered region spans residues 257–425 (DEFRPRSKSQ…SDGGFISSDE (169 aa)). Positions 264-276 (KSQSSSSCSNPIS) are enriched in low complexity. Phosphoserine; by RPS6KB1 is present on residues serine 265 and serine 302. At serine 307 the chain carries Phosphoserine; by IKKB, MAPK8 and RPS6KB1. A phosphoserine mark is found at serine 318, serine 325, serine 340, and serine 343. The span at 349 to 358 (THAHRHRGSS) shows a compositional bias: basic residues. Composition is skewed to low complexity over residues 378–399 (SPSATSPVSLSSSSTSGHGSTS) and 407–419 (SSASVSGSPSDGG). Phosphoserine is present on serine 414. Threonine 441 and threonine 448 each carry phosphothreonine. A Phosphotyrosine; by INSR modification is found at tyrosine 460. Positions 460 to 463 (YICM) match the YXXM motif 1 motif. The residue at position 522 (serine 522) is a Phosphoserine; by RPS6KB1. 2 short sequence motifs (YXXM motif) span residues 546–549 (YTEM) and 608–611 (YMPM). Tyrosine 608 carries the post-translational modification Phosphotyrosine; by INSR. Phosphoserine is present on serine 612. Tyrosine 628 is modified (phosphotyrosine; by INSR). A YXXM motif 4 motif is present at residues 628-631 (YMPM). At serine 632 the chain carries Phosphoserine; by RPS6KB1 and ROCK2. The interval 651–720 (QRVDPNGYMM…PPVESGGGKL (70 aa)) is disordered. The residue at position 658 (tyrosine 658) is a Phosphotyrosine. The short motif at 658-661 (YMMM) is the YXXM motif 5 element. The segment covering 662 to 689 (SPSGSCSPDIGGGSSSSSSISAAPSGSS) has biased composition (low complexity). Positions 727–730 (YMNM) match the YXXM motif 6 motif. Residues 766 to 985 (FKHTQRPGEP…VPNSRGDYMT (220 aa)) form a disordered region. Basic and acidic residues predominate over residues 771 to 780 (RPGEPEEGAR). 2 stretches are compositionally biased toward low complexity: residues 785-794 (RLSSSSGRLR) and 801-810 (DSSSSTSSDS). The residue at position 789 (serine 789) is a Phosphoserine; by AMPK and SIK2. The residue at position 887 (serine 887) is a Phosphoserine. Phosphotyrosine; by INSR is present on residues tyrosine 891, tyrosine 935, and tyrosine 983. Residues 891–893 (YVN) form a GRB2-binding region. 3 consecutive short sequence motifs (YXXM motif) follow at residues 935-938 (YMNM), 983-986 (YMTM), and 1006-1009 (YADM). A disordered region spans residues 1015–1137 (AEKASLPRPT…GSEDVKRHSS (123 aa)). Low complexity predominate over residues 1032 to 1042 (STASSSASVTP). Composition is skewed to polar residues over residues 1043-1052 (QGATAEQATH) and 1069-1081 (TRVNLSPNHNQSA). A phosphoserine mark is found at serine 1096 and serine 1097. The segment covering 1116 to 1129 (AAVGGSGGGGGGGS) has biased composition (gly residues). The residue at position 1173 (tyrosine 1173) is a Phosphotyrosine; by INSR. The interval 1178-1233 (LAKEHSQDCPSQQQSLPPPPPHQPLGSNEGNSPRRSSEDLSNYASISFQKQPEDRQ) is disordered. Lysine 1180 is covalently cross-linked (Glycyl lysine isopeptide (Lys-Gly) (interchain with G-Cter in ubiquitin)). The span at 1203 to 1227 (GSNEGNSPRRSSEDLSNYASISFQK) shows a compositional bias: polar residues. Tyrosine 1220 bears the Phosphotyrosine; by INSR mark.

Interacts (via phosphorylated YXXM motifs) with PIK3R1. Interacts with ROCK1. Interacts with GRB2. Interacts with SOCS7. Interacts (via IRS-type PTB domain) with IGF1R and INSR (via the tyrosine-phosphorylated NPXY motif). Interacts with UBTF and PIK3CA. Interacts (via PH domain) with PHIP. Interacts with FER. Interacts with ALK. Interacts with EIF2AK2/PKR. Interacts with GKAP1. Interacts with DGKZ in the absence of insulin; insulin stimulation decreases this interaction. Found in a ternary complex with DGKZ and PIP5K1A in the absence of insulin stimulation. Interacts with SQSTM1; the interaction is disrupted by the presence of tensin TNS2. Interacts with NCK1 (via SH2 domain). Interacts with NCK2 (via SH3 domain). Interacts with SH2B1; this interaction enhances leptin-induced activation of the PI3-kinase pathway. Interacts with DVL2; this interaction promotes the Wnt/beta-catenin signaling pathway. Serine phosphorylation of IRS1 is a mechanism for insulin resistance. Ser-307 phosphorylation inhibits insulin action through disruption of IRS1 interaction with the insulin receptor. Phosphorylation of Tyr-891 is required for GRB2-binding. Phosphorylated by ALK. Phosphorylated at Ser-265, Ser-302, Ser-632 and Ser-1097 by RPS6KB1; phosphorylation induces accelerated degradation of IRS1. Phosphorylated on tyrosine residues in response to insulin. In skeletal muscles, dephosphorylated on Tyr-608 by TNS2 under anabolic conditions; dephosphorylation results in the proteasomal degradation of IRS1. Post-translationally, ubiquitinated by the Cul7-RING(FBXW8) complex in a mTOR-dependent manner, leading to its degradation: the Cul7-RING(FBXW8) complex recognizes and binds IRS1 previously phosphorylated by S6 kinase (RPS6KB1 or RPS6KB2). Ubiquitinated by TRAF4 through 'Lys-29' linkage; this ubiquitination regulates the interaction of IRS1 with IGFR and IRS1 tyrosine phosphorylation upon IGF1 stimulation. In terms of processing, S-nitrosylation at by BLVRB inhibits its activity. Expressed in osteoblasts, but not in osteoclasts.

It localises to the cytoplasm. The protein localises to the nucleus. Its function is as follows. Signaling adapter protein that participates in the signal transduction from two prominent receptor tyrosine kinases, insulin receptor/INSR and insulin-like growth factor I receptor/IGF1R. Plays therefore an important role in development, growth, glucose homeostasis as well as lipid metabolism. Upon phosphorylation by the insulin receptor, functions as a signaling scaffold that propagates insulin action through binding to SH2 domain-containing proteins including the p85 regulatory subunit of PI3K, NCK1, NCK2, GRB2 or SHP2. Recruitment of GRB2 leads to the activation of the guanine nucleotide exchange factor SOS1 which in turn triggers the Ras/Raf/MEK/MAPK signaling cascade. Activation of the PI3K/AKT pathway is responsible for most of insulin metabolic effects in the cell, and the Ras/Raf/MEK/MAPK is involved in the regulation of gene expression and in cooperation with the PI3K pathway regulates cell growth and differentiation. Acts a positive regulator of the Wnt/beta-catenin signaling pathway through suppression of DVL2 autophagy-mediated degradation leading to cell proliferation. This chain is Insulin receptor substrate 1 (Irs1), found in Mus musculus (Mouse).